Reading from the N-terminus, the 171-residue chain is MNKITVIQGDITNIASEAIINVANSSLLGGGGVDGAIHRAGGPVILAECQAIRSRQGGCKVGEAVITGAGTLPADYVIHTVGPRWSDGRHNEDTQLKSVYLSCFKLVGHHGIKTVSFPNISTGIYGFPKKRAAAIALDVIKHCIAENRTIEKVNLVCFDAENYDLYLKLLN.

Positions 1–171 (MNKITVIQGD…NYDLYLKLLN (171 aa)) constitute a Macro domain. Substrate contacts are provided by residues 10-11 (DI), Asn24, 32-34 (GVD), and 121-125 (STGIY). Asp34 functions as the Proton acceptor in the catalytic mechanism.

This sequence belongs to the MacroD-type family. YmdB subfamily. Homodimer. Interacts with RNase III.

The enzyme catalyses 3''-O-acetyl-ADP-D-ribose + H2O = ADP-D-ribose + acetate + H(+). The catalysed reaction is 2''-O-acetyl-ADP-D-ribose + H2O = ADP-D-ribose + acetate + H(+). Deacetylates O-acetyl-ADP ribose to yield ADP-ribose and free acetate. Down-regulates ribonuclease 3 (RNase III) activity. Acts by interacting directly with the region of the ribonuclease that is required for dimerization/activation. The chain is O-acetyl-ADP-ribose deacetylase 2 from Pantoea vagans (strain C9-1) (Pantoea agglomerans (strain C9-1)).